The following is a 262-amino-acid chain: Putative carbamate hydrolase RutD (262 aa).

The protein belongs to the AB hydrolase superfamily. Hydrolase RutD family.

The catalysed reaction is carbamate + 2 H(+) = NH4(+) + CO2. In terms of biological role, involved in pyrimidine catabolism. May facilitate the hydrolysis of carbamate, a reaction that can also occur spontaneously. The chain is Putative carbamate hydrolase RutD from Rhizobium rhizogenes (strain K84 / ATCC BAA-868) (Agrobacterium radiobacter).